The following is a 414-amino-acid chain: Secernin-1 (414 aa).

The protein belongs to the peptidase C69 family. Secernin subfamily.

It localises to the cytoplasm. Regulates exocytosis in mast cells. Increases both the extent of secretion and the sensitivity of mast cells to stimulation with calcium. This chain is Secernin-1 (Scrn1), found in Mus musculus (Mouse).